The primary structure comprises 1351 residues: D-lysergyl-peptide-synthetase subunit 2 (1351 aa).

The adenylation (A) domain stretch occupies residues 285–684 (RCLSQPTASA…GRKDTQVKLR (400 aa)). In terms of domain architecture, Carrier spans 828–904 (APQTTTEKLL…ALACVVRSGK (77 aa)). The residue at position 865 (S865) is an O-(pantetheine 4'-phosphoryl)serine. The tract at residues 941-1340 (EDVYPCTPLQ…LIRDILAVPQ (400 aa)) is condensation (C) domain.

Belongs to the NRP synthetase family.

It functions in the pathway alkaloid biosynthesis; ergot alkaloid biosynthesis. D-lysergyl-peptide-synthetase subunit 2; part of the gene cluster that mediates the biosynthesis of fungal ergot alkaloid ergovaline, the predominant ergopeptine product in E.festucae var. lolii. DmaW catalyzes the first step of ergot alkaloid biosynthesis by condensing dimethylallyl diphosphate (DMAP) and tryptophan to form 4-dimethylallyl-L-tryptophan. The second step is catalyzed by the methyltransferase easF that methylates 4-dimethylallyl-L-tryptophan in the presence of S-adenosyl-L-methionine, resulting in the formation of 4-dimethylallyl-L-abrine. The catalase easC and the FAD-dependent oxidoreductase easE then transform 4-dimethylallyl-L-abrine to chanoclavine-I which is further oxidized by easD in the presence of NAD(+), resulting in the formation of chanoclavine-I aldehyde. Agroclavine dehydrogenase easG then mediates the conversion of chanoclavine-I aldehyde to agroclavine via a non-enzymatic adduct reaction: the substrate is an iminium intermediate that is formed spontaneously from chanoclavine-I aldehyde in the presence of glutathione. The presence of easA is not required to complete this reaction. Further conversion of agroclavine to paspalic acid is a two-step process involving oxidation of agroclavine to elymoclavine and of elymoclavine to paspalic acid, the second step being performed by the elymoclavine oxidase cloA. Paspalic acid is then further converted to D-lysergic acid. Ergovaline is assembled from D-lysergic acid and three different amino acids by the D-lysergyl-peptide-synthetase composed of a monomudular (lpsB) and a trimodular (lpsA) nonribosomal peptide synthetase subunit. The polypeptide is D-lysergyl-peptide-synthetase subunit 2 (Epichloe festucae var. lolii (Neotyphodium lolii)).